A 343-amino-acid chain; its full sequence is L-rhamnose-proton symporter (343 aa).

The next 10 helical transmembrane spans lie at 4-24, 38-58, 68-88, 101-121, 137-157, 175-195, 207-227, 254-274, 289-309, and 320-340; these read AIIL…CFYA, WSIG…YLLL, FSIA…IGNI, MGIG…TPIL, TLLG…AGLL, LILA…MDAA, INSL…GAII, LLIT…LQFF, MSWM…GLLL, and VAVL…VGLG.

This sequence belongs to the L-rhamnose transporter (TC 2.A.7.6) family.

It is found in the cell inner membrane. It catalyses the reaction L-rhamnopyranose(in) + H(+)(in) = L-rhamnopyranose(out) + H(+)(out). Uptake of L-rhamnose across the cytoplasmic membrane with the concomitant transport of protons into the cell (symport system). This chain is L-rhamnose-proton symporter, found in Yersinia pestis bv. Antiqua (strain Antiqua).